We begin with the raw amino-acid sequence, 65 residues long: Large ribosomal subunit protein bL35 (65 aa).

The interval 1-22 (MPKMKTKSSAKKRFKVTGSGKI) is disordered.

This sequence belongs to the bacterial ribosomal protein bL35 family.

The sequence is that of Large ribosomal subunit protein bL35 from Flavobacterium psychrophilum (strain ATCC 49511 / DSM 21280 / CIP 103535 / JIP02/86).